A 434-amino-acid chain; its full sequence is V-type ATP synthase beta chain (434 aa).

It belongs to the ATPase alpha/beta chains family.

Produces ATP from ADP in the presence of a proton gradient across the membrane. The V-type beta chain is a regulatory subunit. In Borrelia garinii subsp. bavariensis (strain ATCC BAA-2496 / DSM 23469 / PBi) (Borreliella bavariensis), this protein is V-type ATP synthase beta chain.